The primary structure comprises 99 residues: Aspartyl/glutamyl-tRNA(Asn/Gln) amidotransferase subunit C (99 aa).

This sequence belongs to the GatC family. In terms of assembly, heterotrimer of A, B and C subunits.

It catalyses the reaction L-glutamyl-tRNA(Gln) + L-glutamine + ATP + H2O = L-glutaminyl-tRNA(Gln) + L-glutamate + ADP + phosphate + H(+). The enzyme catalyses L-aspartyl-tRNA(Asn) + L-glutamine + ATP + H2O = L-asparaginyl-tRNA(Asn) + L-glutamate + ADP + phosphate + 2 H(+). Its function is as follows. Allows the formation of correctly charged Asn-tRNA(Asn) or Gln-tRNA(Gln) through the transamidation of misacylated Asp-tRNA(Asn) or Glu-tRNA(Gln) in organisms which lack either or both of asparaginyl-tRNA or glutaminyl-tRNA synthetases. The reaction takes place in the presence of glutamine and ATP through an activated phospho-Asp-tRNA(Asn) or phospho-Glu-tRNA(Gln). This Rhodococcus opacus (strain B4) protein is Aspartyl/glutamyl-tRNA(Asn/Gln) amidotransferase subunit C.